A 319-amino-acid polypeptide reads, in one-letter code: Acetaldehyde dehydrogenase 1 (319 aa).

Cys-129 serves as the catalytic Acyl-thioester intermediate. Residues 160-168 and Asn-287 each bind NAD(+); that span reads SAGPGTRAN.

The protein belongs to the acetaldehyde dehydrogenase family.

It catalyses the reaction acetaldehyde + NAD(+) + CoA = acetyl-CoA + NADH + H(+). This chain is Acetaldehyde dehydrogenase 1, found in Burkholderia lata (strain ATCC 17760 / DSM 23089 / LMG 22485 / NCIMB 9086 / R18194 / 383).